Here is a 349-residue protein sequence, read N- to C-terminus: Cdc42 effector protein 4 (349 aa).

Lys5 bears the N6-methyllysine mark. Ser18 is modified (phosphoserine). One can recognise a CRIB domain in the interval 27-41 (ISAPLGDFRHTMHVG). Phosphoserine occurs at positions 64, 103, 107, and 116. The span at 123–132 (KEAAEKDSSK) shows a compositional bias: basic and acidic residues. Disordered stretches follow at residues 123 to 172 (KEAA…LLDE), 220 to 240 (QWGS…GPSS), and 278 to 349 (GWAV…EIRV). Ser136, Ser138, Ser140, Ser154, Ser165, Ser223, Ser285, and Ser288 each carry phosphoserine. The span at 280 to 308 (AVVAPSPSSARSVGSHTTRDSSSLSSYTS) shows a compositional bias: low complexity. Basic and acidic residues predominate over residues 311–322 (LEERSPAFRGPD). Acidic residues predominate over residues 338–349 (FMDEEEEDEIRV).

This sequence belongs to the BORG/CEP family. Interacts with CDC42 and RHOQ, in a GTP-dependent manner. In terms of tissue distribution, ubiquitous.

It localises to the endomembrane system. The protein resides in the cytoplasm. Its subcellular location is the cytoskeleton. Probably involved in the organization of the actin cytoskeleton. May act downstream of CDC42 to induce actin filament assembly leading to cell shape changes. Induces pseudopodia formation, when overexpressed in fibroblasts. This chain is Cdc42 effector protein 4 (Cdc42ep4), found in Mus musculus (Mouse).